Consider the following 183-residue polypeptide: Transcription factor 15 (183 aa).

A disordered region spans residues 24–46; sequence DEENRSESDTSDQSYGCCEGAEA. In terms of domain architecture, bHLH spans 61–113; it reads KQRQAANARERDRTQSVNTAFTALRTLIPTEPVDRKLSKIETLRLASSYIAHL.

As to quaternary structure, heterodimer; efficient DNA binding requires dimerization with another bHLH protein.

Its subcellular location is the nucleus. In terms of biological role, early transcription factor that plays a key role in somitogenesis, paraxial mesoderm development and regulation of stem cell pluripotency. Essential for the mesenchymal to epithelial transition associated with somite formation. Required for somite morphogenesis, thereby regulating patterning of the axial skeleton and skeletal muscles. Also plays a key role in regulation of stem cell pluripotency. Promotes pluripotency exit of embryonic stem cells (ESCs) by priming ESCs for differentiation. Acts as a key regulator of self-renewal of hematopoietic stem cells (HSCs) by mediating HSCs quiescence and long-term self-renewal. Acts by forming a heterodimer with another helix-loop-helix (bHLH) protein, that binds DNA on E-box motifs (5'-CANNTG-3') and activates transcription of target genes. This is Transcription factor 15 (TCF15) from Gallus gallus (Chicken).